Here is a 692-residue protein sequence, read N- to C-terminus: Protein artemis (692 aa).

Phosphothreonine is present on threonine 380. Serine 385 carries the phosphoserine modification. Disordered regions lie at residues 504 to 555 (LENF…DSQS) and 640 to 664 (STNA…LPKR). Positions 506–520 (NFPSSTVAGGSQSPK) are enriched in polar residues. Low complexity predominate over residues 530–543 (THISSQNSSQSTHI). 2 stretches are compositionally biased toward polar residues: residues 544 to 555 (TEQGSQGWDSQS) and 640 to 650 (STNADSQSSSD). Residue serine 645 is modified to Phosphoserine; by ATM.

This sequence belongs to the DNA repair metallo-beta-lactamase (DRMBL) family. As to quaternary structure, interacts with LIG4; the interaction is direct. Interacts with ATM. Interacts with BRCA1. Interacts with PRKDC. Interacts with TP53BP1. Also exhibits ATM- and phosphorylation-dependent interaction with the MRN complex, composed of MRE11, RAD50, and NBN. Phosphorylation on undefined residues by PRKDC may stimulate endonucleolytic activity on 5' and 3' hairpins and overhangs. PRKDC must remain present, even after phosphorylation, for efficient hairpin opening. Also phosphorylated by ATM in response to ionizing radiation (IR) and by ATR in response to ultraviolet (UV) radiation. In terms of tissue distribution, ubiquitously expressed, with highest levels in the kidney, lung, pancreas and placenta (at the mRNA level). Expression is not increased in thymus or bone marrow, sites of V(D)J recombination.

The protein localises to the nucleus. Its function is as follows. Nuclease involved in DNA non-homologous end joining (NHEJ); required for double-strand break repair and V(D)J recombination. Required for V(D)J recombination, the process by which exons encoding the antigen-binding domains of immunoglobulins and T-cell receptor proteins are assembled from individual V, (D), and J gene segments. V(D)J recombination is initiated by the lymphoid specific RAG endonuclease complex, which generates site specific DNA double strand breaks (DSBs). These DSBs present two types of DNA end structures: hairpin sealed coding ends and phosphorylated blunt signal ends. These ends are independently repaired by the non homologous end joining (NHEJ) pathway to form coding and signal joints respectively. This protein exhibits single-strand specific 5'-3' exonuclease activity in isolation and acquires endonucleolytic activity on 5' and 3' hairpins and overhangs when in a complex with PRKDC. The latter activity is required specifically for the resolution of closed hairpins prior to the formation of the coding joint. Also required for the repair of complex DSBs induced by ionizing radiation, which require substantial end-processing prior to religation by NHEJ. In Homo sapiens (Human), this protein is Protein artemis.